We begin with the raw amino-acid sequence, 260 residues long: MIIVLSPAKSLDYDTPAHVPSYTQPAFVDDASELIDGLRKLSPQDIATLMDISDPLARLNFQRYADWSPTFTPANAKQAVLAFNGDVYEGFDAKSLSAADLDYAQQHVRVLSGLYGLLRPLDLLQPYRLEMGTRFASARGKDLYAFWGDRITRALNEQLETRSGAARVLINCASTEYFKSVKPKLLAAPVVTPVFEDWKGGRYKIISFHAKRARGLMARYIVENRIAEPAALKDFALEGYAFDAAASNDSTYVYRRRIGE.

The protein belongs to the UPF0246 family.

The polypeptide is UPF0246 protein Bcep1808_2308 (Burkholderia vietnamiensis (strain G4 / LMG 22486) (Burkholderia cepacia (strain R1808))).